The primary structure comprises 297 residues: Probable endonuclease 4 (297 aa).

The Zn(2+) site is built by histidine 69, histidine 110, glutamate 145, aspartate 179, histidine 182, histidine 214, aspartate 227, histidine 229, and glutamate 259.

Belongs to the AP endonuclease 2 family. Zn(2+) serves as cofactor.

It carries out the reaction Endonucleolytic cleavage to 5'-phosphooligonucleotide end-products.. Endonuclease IV plays a role in DNA repair. It cleaves phosphodiester bonds at apurinic or apyrimidinic (AP) sites, generating a 3'-hydroxyl group and a 5'-terminal sugar phosphate. The sequence is that of Probable endonuclease 4 from Oceanobacillus iheyensis (strain DSM 14371 / CIP 107618 / JCM 11309 / KCTC 3954 / HTE831).